We begin with the raw amino-acid sequence, 107 residues long: Homeobox protein HD-7 (107 aa).

A DNA-binding region (homeobox) is located at residues lysine 21–asparagine 80.

Its subcellular location is the nucleus. The chain is Homeobox protein HD-7 (HD-7) from Encephalitozoon cuniculi (strain GB-M1) (Microsporidian parasite).